The sequence spans 367 residues: MEHGLRSIPAWTLDKFIEDYLLPDTTFGADVKSAVNVVCDFLKERCFQGAAHPVRVSKVVKGGSSGKGTTLKGKSDADLVVFLNNLTSFEDQLNRRGEFIKEIKKQLYEVQHERRFRVKFEVQSSWWPNARSLSFKLSAPHLHQEVEFDVLPAFDVLGHVNTSSKPDPRIYAILIEECTSLGKDGEFSTCFTELQRNFLKQRPTKLKSLIRLVKHWYQLCKEKLGKPLPPQYALELLTVFAWEQGNGCYEFNTAQGFRTVLELVINYQHLRIYWTKYYDFQHQEVSKYLHRQLRKARPVILDPADPTGNVAGGNPEGWRRLAEEADVWLWYPCFIKKDGSRVSSWDVPTVVPVPFEQVEENWTCILL.

The segment at 14-61 (DKFIEDYLLPDTTFGADVKSAVNVVCDFLKERCFQGAAHPVRVSKVVK) is interaction with dsRNA. Ser64 provides a ligand contact to ATP. Residues Asp76, Asp78, and Asp149 each contribute to the Mg(2+) site. The interaction with dsRNA stretch occupies residues 201 to 211 (QRPTKLKSLIR). ATP contacts are provided by Arg211, Lys214, and Gln231. Cys364 is lipidated: S-geranylgeranyl cysteine.

The protein belongs to the 2-5A synthase family. As to quaternary structure, monomer. Homotetramer. Interacts with OAS1D; the interaction inhibits OAS1A catalytic activity. It depends on Mg(2+) as a cofactor. Post-translationally, C-terminal prenylated. Expressed in oocytes and granulosa cells of ovary, in intestine, stomach, spleen and uterus (at protein level). Expressed at high levels in the digestive tract and lymphoid organs. Expressed in ovary and spleen.

Its subcellular location is the cytoplasm. It is found in the mitochondrion. The protein localises to the nucleus. It localises to the microsome. The protein resides in the endoplasmic reticulum. The catalysed reaction is 3 ATP = 5'-triphosphoadenylyl-(2'-&gt;5')-adenylyl-(2'-&gt;5')-adenosine + 2 diphosphate. With respect to regulation, produced as a latent enzyme which is activated by dsRNA generated during the course of viral infection. The dsRNA activator must be at least 15 nucleotides long, and no modification of the 2'-hydroxyl group is tolerated. ssRNA or dsDNA do not act as activators. Functionally, interferon-induced, dsRNA-activated antiviral enzyme which plays a critical role in cellular innate antiviral response. In addition, it may also play a role in other cellular processes such as apoptosis, cell growth, differentiation and gene regulation. Synthesizes higher oligomers of 2'-5'-oligoadenylates (2-5A) from ATP which then bind to the inactive monomeric form of ribonuclease L (RNase L) leading to its dimerization and subsequent activation. Activation of RNase L leads to degradation of cellular as well as viral RNA, resulting in the inhibition of protein synthesis, thus terminating viral replication. Can mediate the antiviral effect via the classical RNase L-dependent pathway or an alternative antiviral pathway independent of RNase L. This chain is 2'-5'-oligoadenylate synthase 1A (Oas1a), found in Mus musculus (Mouse).